A 684-amino-acid polypeptide reads, in one-letter code: Threonine--tRNA ligase (684 aa).

The 66-residue stretch at 1-66 (MTVPATDSCP…DTDAEVVPVA (66 aa)) folds into the TGS domain. A catalytic region spans residues 261–567 (DHRKLGSELD…LTEHYAGAFP (307 aa)). Residues cysteine 366, histidine 417, and histidine 544 each coordinate Zn(2+).

It belongs to the class-II aminoacyl-tRNA synthetase family. As to quaternary structure, homodimer. Zn(2+) is required as a cofactor.

It localises to the cytoplasm. It carries out the reaction tRNA(Thr) + L-threonine + ATP = L-threonyl-tRNA(Thr) + AMP + diphosphate + H(+). Functionally, catalyzes the attachment of threonine to tRNA(Thr) in a two-step reaction: L-threonine is first activated by ATP to form Thr-AMP and then transferred to the acceptor end of tRNA(Thr). Also edits incorrectly charged L-seryl-tRNA(Thr). This Mycolicibacterium paratuberculosis (strain ATCC BAA-968 / K-10) (Mycobacterium paratuberculosis) protein is Threonine--tRNA ligase.